The following is a 354-amino-acid chain: Guanine nucleotide-binding protein G(o) subunit alpha (354 aa).

A lipid anchor (N-myristoyl glycine) is attached at Gly-2. Residue Cys-3 is the site of S-palmitoyl cysteine attachment. One can recognise a G-alpha domain in the interval 32–354 (KDIKLLLLGA…ANNLRGCGLY (323 aa)). The segment at 35–48 (KLLLLGAGESGKST) is G1 motif. GTP contacts are provided by residues 40-47 (GAGESGKS), 176-182 (LRTRVKT), 201-205 (DVGGQ), 270-273 (NKKD), and Ala-326. 2 residues coordinate Mg(2+): Ser-47 and Thr-182. A G2 motif region spans residues 174–182 (DILRTRVKT). The tract at residues 197 to 206 (FKLFDVGGQR) is G3 motif. Residues 266 to 273 (ILFLNKKD) are G4 motif. Positions 324 to 329 (TCATDT) are G5 motif.

This sequence belongs to the G-alpha family. G(i/o/t/z) subfamily. G proteins are composed of 3 units; alpha, beta and gamma. The alpha chain contains the guanine nucleotide binding site. Interacts (in GDP-bound form) with gpr-1; gpr-1 forms a complex with gpr-2 and lin-5. Interacts (in GDP-bound form) with gpb-1. Interacts (in GDP-bound form) with gbas-1 (via GBA motif); the interaction leads to activation of goa-1. In terms of tissue distribution, expressed in the ASER neuron and the intestine.

Functionally, guanine nucleotide-binding proteins (G proteins) are involved as modulators or transducers in various transmembrane signaling systems. In the 1-cell embryo, probably together with gpa-16, controls nuclear rotation and spindle elongation during mitosis. During the first embryonic cell divisions, plays a role in gpr-1/2 cortical localization and in the proper orientation of EMS blastomere mitotic spindle. Polarity determinants (par genes) may regulate lin-5/gpr-1/gpr-2/goa-1 locally to create the asymmetric forces that drive spindle movement. Involved in chemosensory responses to attractive and repellent odors detected by AWC and AWB sensory neurons, respectively. In ASER neurons, acts downstream of glr-3 to regulate cold avoidance behavior via calcium signaling, and it may also play a role in sensing cold in the intestine. Negatively regulates axon regeneration after injury downstream of the inhibitory compound arachidonoyl ethanolamide (AEA) by antagonizing the activation of the JNK pathway (mlk-1/mek-1/kgb-1). In neurons, may negatively regulate diacylglycerol (DAG) production mediated by egl-30 signaling cascade and thereby negatively regulates acetylcholine release. Couples to the muscarinic acetylcholine receptor gar-2 to negatively regulate cholinergic receptor activity in the presence of high levels of acetylcholine in ventral cord motor neurons. Plays a role in the navigational capacity of sperm and the targeting of sperm derived from males to the fertilization site in the uterus of hermaphrodites. Involved in egg-laying and in regulating dopamine-mediated locomotion. Most likely couples to the dopamine receptors dop-2 and dop-3 to positively regulate the dopamine-mediated suppression of crh-1/CREB1 transcription factor activation in cholinergic SIA neurons in the presence of food. This Caenorhabditis elegans protein is Guanine nucleotide-binding protein G(o) subunit alpha.